The primary structure comprises 189 residues: Probable nicotinate-nucleotide adenylyltransferase (189 aa).

It belongs to the NadD family.

It carries out the reaction nicotinate beta-D-ribonucleotide + ATP + H(+) = deamido-NAD(+) + diphosphate. Its pathway is cofactor biosynthesis; NAD(+) biosynthesis; deamido-NAD(+) from nicotinate D-ribonucleotide: step 1/1. Functionally, catalyzes the reversible adenylation of nicotinate mononucleotide (NaMN) to nicotinic acid adenine dinucleotide (NaAD). This is Probable nicotinate-nucleotide adenylyltransferase from Bacillus cereus (strain ATCC 10987 / NRS 248).